The chain runs to 255 residues: Type III pantothenate kinase (255 aa).

Position 6–13 (6–13 (DIGNSNID)) interacts with ATP. 107-110 (GADL) serves as a coordination point for substrate. The active-site Proton acceptor is the D109. A K(+)-binding site is contributed by D129. T132 contacts ATP. T183 serves as a coordination point for substrate.

It belongs to the type III pantothenate kinase family. As to quaternary structure, homodimer. NH4(+) is required as a cofactor. The cofactor is K(+).

It is found in the cytoplasm. It carries out the reaction (R)-pantothenate + ATP = (R)-4'-phosphopantothenate + ADP + H(+). Its pathway is cofactor biosynthesis; coenzyme A biosynthesis; CoA from (R)-pantothenate: step 1/5. Functionally, catalyzes the phosphorylation of pantothenate (Pan), the first step in CoA biosynthesis. In Dictyoglomus turgidum (strain DSM 6724 / Z-1310), this protein is Type III pantothenate kinase.